The chain runs to 320 residues: V-set and transmembrane domain-containing protein 4 (320 aa).

The first 23 residues, 1-23 (MRLLALAAAALLARAPAPEVCAA), serve as a signal peptide directing secretion. The Ig-like domain occupies 24–155 (LNVTVSPGPV…SSATEMRVIS (132 aa)). At 24–180 (LNVTVSPGPV…WAFFEDLYVY (157 aa)) the chain is on the extracellular side. Residues asparagine 25, asparagine 41, asparagine 89, and asparagine 144 are each glycosylated (N-linked (GlcNAc...) asparagine). An intrachain disulfide couples cysteine 46 to cysteine 127. The helical transmembrane segment at 181 to 201 (AVLVCCVGILSILLFMLVIVW) threads the bilayer. Over 202–320 (QSVFNKRKSR…AQILFEENKL (119 aa)) the chain is Cytoplasmic.

Post-translationally, proteolytically cleaved to generate a bioactive peptide.

It localises to the secreted. Its subcellular location is the cell membrane. Peptide Lv enhances L-type voltage-gated calcium channel (L-VGCC) currents in retinal photoreceptors. The sequence is that of V-set and transmembrane domain-containing protein 4 (VSTM4) from Homo sapiens (Human).